A 517-amino-acid chain; its full sequence is 6-phosphogluconate dehydrogenase, decarboxylating (517 aa).

Residues 35–40 (GLAVMG), 58–60 (NRT), 100–102 (VKA), and asparagine 128 contribute to the NADP(+) site. Residues asparagine 128 and 154–156 (SGG) each bind substrate. Lysine 208 functions as the Proton acceptor in the catalytic mechanism. Residue 211–212 (HN) coordinates substrate. Catalysis depends on glutamate 215, which acts as the Proton donor. Substrate-binding residues include tyrosine 216, lysine 286, arginine 313, arginine 474, and histidine 480.

It belongs to the 6-phosphogluconate dehydrogenase family. Homodimer.

It carries out the reaction 6-phospho-D-gluconate + NADP(+) = D-ribulose 5-phosphate + CO2 + NADPH. It participates in carbohydrate degradation; pentose phosphate pathway; D-ribulose 5-phosphate from D-glucose 6-phosphate (oxidative stage): step 3/3. Catalyzes the oxidative decarboxylation of 6-phosphogluconate to ribulose 5-phosphate and CO(2), with concomitant reduction of NADP to NADPH. The polypeptide is 6-phosphogluconate dehydrogenase, decarboxylating (DOR14) (Candida albicans (Yeast)).